A 1185-amino-acid chain; its full sequence is Mucin-6 (1185 aa).

2 disulfide bridges follow: Cys1–Cys132 and Cys23–Cys168. The region spanning 1–169 (CSTWGGGHFS…KMDDPSEICL (169 aa)) is the VWFD 1 domain. N-linked (GlcNAc...) (complex) asparagine glycosylation is present at Asn223. Residues 257-312 (CSANQIYEECGSPCIKTCSNPEYSCSSHCTYGCFCPEGTVLDDISKNRTCVHLEQC) form the TIL 1 domain. Residues 350-534 (GRCSLEGGSF…AMERETDPCA (185 aa)) enclose the VWFD 2 domain. Disulfide bonds link Cys352–Cys488 and Cys374–Cys533. TIL domains follow at residues 619–676 (CTGN…KSHC) and 737–782 (GATC…PEEC). In terms of domain architecture, VWFD 3 spans 821 to 993 (STCNLYGEGH…NSWKENPLCG (173 aa)). 4 cysteine pairs are disulfide-bonded: Cys823-Cys957, Cys845-Cys992, Cys854-Cys954, and Cys872-Cys879. A glycan (N-linked (GlcNAc...) (complex) asparagine) is linked at Asn930. Positions 1160-1178 (PTATQPTSPSTSSASTVLT) are enriched in low complexity. Residues 1160-1185 (PTATQPTSPSTSSASTVLTETTNPPV) are disordered.

As to quaternary structure, multimer; disulfide-linked. In terms of processing, N-glycosylated with N-acetylglucosamine (6.7%), N-acetylgalactosamine (0.6%), galactose (1.8%), mannose (4.6%), N-acetylneuraminic acid (1.0%) and sulfate-containing glycans (0.7%).

It localises to the secreted. Its function is as follows. Ovomucin, the glycoprotein responsible for the gel properties of egg white, is composed for 2 subunits, alpha-ovomucin/MUC5B and beta-ovomucin/MUC6. The protein is Mucin-6 (MUC6) of Gallus gallus (Chicken).